The primary structure comprises 49 residues: Thymopoietin-1 (49 aa).

The LEM-like domain maps to 4–47 (LEDPSVLTKEKLKSELVANNVTLPAGEQRKDVYVELYLQHLTAL). Positions 32–36 (RKDVY) are biological activity.

It belongs to the thymopoietin family.

Functionally, hormone of the thymus with pleiotropic actions on prothymocytes, mature T-cells, the nicotinic acetylcholine receptor, and pituitary corticotrophs. This is Thymopoietin-1 from Bos taurus (Bovine).